The sequence spans 73 residues: Large ribosomal subunit protein uL29 (73 aa).

Residues 1–20 form a disordered region; that stretch reads MYKAKDLRDQSLEELEATHD.

The protein belongs to the universal ribosomal protein uL29 family.

The polypeptide is Large ribosomal subunit protein uL29 (Protochlamydia amoebophila (strain UWE25)).